The following is a 108-amino-acid chain: Large ribosomal subunit protein uL24 (108 aa).

Belongs to the universal ribosomal protein uL24 family. Part of the 50S ribosomal subunit.

In terms of biological role, one of two assembly initiator proteins, it binds directly to the 5'-end of the 23S rRNA, where it nucleates assembly of the 50S subunit. Functionally, one of the proteins that surrounds the polypeptide exit tunnel on the outside of the subunit. The chain is Large ribosomal subunit protein uL24 from Geobacter metallireducens (strain ATCC 53774 / DSM 7210 / GS-15).